Consider the following 150-residue polypeptide: Cytosine deaminase (150 aa).

The region spanning 3 to 121 is the CMP/dCMP-type deaminase domain; the sequence is FDDKKGLQVA…KLLIENGVEV (119 aa). N44 serves as a coordination point for substrate. H55 lines the Zn(2+) pocket. The active-site Proton donor is the E57. Zn(2+)-binding residues include C84 and C87. A substrate-binding site is contributed by D147.

The protein belongs to the cytidine and deoxycytidylate deaminase family. Homodimer. The cofactor is Zn(2+).

Its subcellular location is the cytoplasm. The protein resides in the nucleus. It carries out the reaction cytosine + H2O + H(+) = uracil + NH4(+). The protein operates within pyrimidine metabolism; UMP biosynthesis via salvage pathway; uracil from cytosine: step 1/1. Functionally, catalyzes the hydrolytic deamination of cytosine to uracil or 5-methylcytosine to thymine. Is involved in the pyrimidine salvage pathway, which allows the cell to utilize cytosine for pyrimidine nucleotide synthesis. The chain is Cytosine deaminase from Candida albicans (strain SC5314 / ATCC MYA-2876) (Yeast).